The following is a 306-amino-acid chain: Low-density lipoprotein receptor class A domain-containing protein 4 (306 aa).

At 1-64 the chain is on the lumenal side; that stretch reads MPEAGFQATN…PPGIFNSELE (64 aa). Residues 16 to 48 enclose the LDL-receptor class A domain; it reads KFTCTSGKCLYLGSLVCNQQNDCGDNSDEENCL. 2 cysteine pairs are disulfide-bonded: Cys-19–Cys-38 and Cys-32–Cys-47. Residues 65–85 traverse the membrane as a helical segment; sequence FAQIIIIVVVVTVMVVVIVCL. Residues 86 to 306 are Cytoplasmic-facing; that stretch reads LNHYKVSTRS…GKDRKPGNLV (221 aa). The short motif at 180–183 is the PPxY motif 1 element; sequence PPPY. Positions 208–211 match the SMAD interaction motif (SIM) motif; sequence PPNR. The PPxY motif 2 motif lies at 252–255; it reads PPTY. A disordered region spans residues 286–306; sequence NNAESTIVPIKGKDRKPGNLV. Positions 296 to 306 are enriched in basic and acidic residues; it reads KGKDRKPGNLV.

The protein belongs to the PMEPA1 family. As to quaternary structure, interacts with PMEPA1. Interacts (via the SMAD interaction motif) with SMAD2 and SMAD3. In terms of tissue distribution, expressed in lymphocytes.

Its subcellular location is the early endosome membrane. Functionally, functions as a negative regulator of TGF-beta signaling and thereby probably plays a role in cell proliferation, differentiation, apoptosis, motility, extracellular matrix production and immunosuppression. In the canonical TGF-beta pathway, ZFYVE9/SARA recruits the intracellular signal transducer and transcriptional modulators SMAD2 and SMAD3 to the TGF-beta receptor. Phosphorylated by the receptor, SMAD2 and SMAD3 then form a heteromeric complex with SMAD4 that translocates to the nucleus to regulate transcription. Through interaction with SMAD2 and SMAD3, LDLRAD4 may compete with ZFYVE9 and SMAD4 and prevent propagation of the intracellular signal. In Homo sapiens (Human), this protein is Low-density lipoprotein receptor class A domain-containing protein 4 (LDLRAD4).